The chain runs to 475 residues: Pyruvate kinase (475 aa).

Arg-36 is a binding site for substrate. K(+) contacts are provided by Asn-38, Ser-40, and Asp-70. Residue 38–41 coordinates ATP; it reads NFSH. ATP is bound by residues Arg-77 and Lys-158. Glu-223 provides a ligand contact to Mg(2+). 3 residues coordinate substrate: Gly-246, Asp-247, and Thr-279. Asp-247 serves as a coordination point for Mg(2+).

The protein belongs to the pyruvate kinase family. Homotetramer. Requires a divalent metal cation as cofactor.

The catalysed reaction is pyruvate + ATP = phosphoenolpyruvate + ADP + H(+). The protein operates within carbohydrate degradation; glycolysis; pyruvate from D-glyceraldehyde 3-phosphate: step 5/5. This chain is Pyruvate kinase (pki), found in Thermococcus litoralis (strain ATCC 51850 / DSM 5473 / JCM 8560 / NS-C).